Reading from the N-terminus, the 492-residue chain is 3-octaprenyl-4-hydroxybenzoate carboxy-lyase (492 aa).

N175 provides a ligand contact to Mn(2+). Residues 178 to 180, 192 to 194, and 197 to 198 contribute to the prenylated FMN site; these read IYR, RWL, and RG. E241 lines the Mn(2+) pocket. The active-site Proton donor is the D290.

This sequence belongs to the UbiD family. Homohexamer. It depends on prenylated FMN as a cofactor. The cofactor is Mn(2+).

It is found in the cell membrane. The catalysed reaction is a 4-hydroxy-3-(all-trans-polyprenyl)benzoate + H(+) = a 2-(all-trans-polyprenyl)phenol + CO2. It functions in the pathway cofactor biosynthesis; ubiquinone biosynthesis. In terms of biological role, catalyzes the decarboxylation of 3-octaprenyl-4-hydroxy benzoate to 2-octaprenylphenol, an intermediate step in ubiquinone biosynthesis. In Salmonella choleraesuis (strain SC-B67), this protein is 3-octaprenyl-4-hydroxybenzoate carboxy-lyase.